Reading from the N-terminus, the 67-residue chain is Large ribosomal subunit protein uL29 (67 aa).

Belongs to the universal ribosomal protein uL29 family.

In Wolbachia pipientis wMel, this protein is Large ribosomal subunit protein uL29.